A 147-amino-acid chain; its full sequence is Fluoride-specific ion channel FluC 1 (147 aa).

Helical transmembrane passes span 29 to 49 (YVYIFIGGALGALLRYLISFL), 61 to 81 (IANLTGAFVMGLLTALTIAFF), 90 to 110 (AITTGFLGALTTFSTFQLELI), and 118 to 138 (FITLLLYAVTSYVFGILLCYV). 2 residues coordinate Na(+): Gly97 and Thr100.

This sequence belongs to the fluoride channel Fluc/FEX (TC 1.A.43) family.

It localises to the cell membrane. The catalysed reaction is fluoride(in) = fluoride(out). Its activity is regulated as follows. Na(+) is not transported, but it plays an essential structural role and its presence is essential for fluoride channel function. Fluoride-specific ion channel. Important for reducing fluoride concentration in the cell, thus reducing its toxicity. This chain is Fluoride-specific ion channel FluC 1, found in Staphylococcus aureus (strain MRSA252).